A 441-amino-acid chain; its full sequence is Heat shock factor protein 4 (441 aa).

Residues 17 to 121 mediate DNA binding; the sequence is NVPAFLTKLW…EHLLEHIKRK (105 aa). Residues 130 to 205 form a hydrophobic repeat HR-A/B region; that stretch reads TKVRQEDLSK…QMQSNSPSTV (76 aa).

Belongs to the HSF family. As to expression, predominantly expressed in the eye.

The protein resides in the nucleus. Its function is as follows. Heat-shock transcription factor that specifically binds heat shock promoter elements (HSE). Required for denucleation and organelle rupture and degradation that occur during eye lens terminal differentiation, when fiber cells that compose the lens degrade all membrane-bound organelles in order to provide lens with transparency to allow the passage of light. In this process, may regulate denucleation of lens fiber cells in part by activating dnase1l1l and dnase2b transcription. May be involved in DNA repair through the transcriptional regulation of rad51. May up-regulate TP53 protein in lens fiber cells, possibly through protein stabilization. In the eye lens, controls the expression of alpha-crystallin B chain/CRYAB and consequently may be involved in the regulation of lysosomal acidification. The chain is Heat shock factor protein 4 from Danio rerio (Zebrafish).